A 371-amino-acid chain; its full sequence is Chaperone protein DnaJ (371 aa).

The J domain occupies 4 to 68 (DYYKILGVSK…QKRAAYDRFG (65 aa)). Residues 134 to 212 (GIEKNISFSS…CHGMGRCHKQ (79 aa)) form a CR-type zinc finger. Residues Cys-147, Cys-150, Cys-164, Cys-167, Cys-186, Cys-189, Cys-200, and Cys-203 each contribute to the Zn(2+) site. 4 CXXCXGXG motif repeats span residues 147–154 (CDTCHGSG), 164–171 (CDACGGVG), 186–193 (CHKCKGNG), and 200–207 (CKKCHGMG).

It belongs to the DnaJ family. In terms of assembly, homodimer. Zn(2+) is required as a cofactor.

Its subcellular location is the cytoplasm. Participates actively in the response to hyperosmotic and heat shock by preventing the aggregation of stress-denatured proteins and by disaggregating proteins, also in an autonomous, DnaK-independent fashion. Unfolded proteins bind initially to DnaJ; upon interaction with the DnaJ-bound protein, DnaK hydrolyzes its bound ATP, resulting in the formation of a stable complex. GrpE releases ADP from DnaK; ATP binding to DnaK triggers the release of the substrate protein, thus completing the reaction cycle. Several rounds of ATP-dependent interactions between DnaJ, DnaK and GrpE are required for fully efficient folding. Also involved, together with DnaK and GrpE, in the DNA replication of plasmids through activation of initiation proteins. The sequence is that of Chaperone protein DnaJ from Rickettsia akari (strain Hartford).